The chain runs to 569 residues: Methionine--tRNA ligase (569 aa).

The 'HIGH' region signature appears at 11 to 21 (PYINGVKHLGN). The Zn(2+) site is built by Cys143, Cys146, Cys156, and Cys159. The 'KMSKS' region motif lies at 342 to 346 (KFSTS). Position 345 (Thr345) interacts with ATP.

Belongs to the class-I aminoacyl-tRNA synthetase family. MetG type 1 subfamily. In terms of assembly, monomer. The cofactor is Zn(2+).

The protein localises to the cytoplasm. It carries out the reaction tRNA(Met) + L-methionine + ATP = L-methionyl-tRNA(Met) + AMP + diphosphate. Its function is as follows. Is required not only for elongation of protein synthesis but also for the initiation of all mRNA translation through initiator tRNA(fMet) aminoacylation. The protein is Methionine--tRNA ligase of Caulobacter sp. (strain K31).